The sequence spans 301 residues: GTPase Era (301 aa).

The Era-type G domain occupies 4–173 (KAGFVALIGK…LECISKHLIP (170 aa)). The tract at residues 12–19 (GKPNAGKS) is G1. Residue 12–19 (GKPNAGKS) participates in GTP binding. Residues 38–42 (NATRK) form a G2 region. A G3 region spans residues 64 to 67 (DTPG). GTP contacts are provided by residues 64-68 (DTPGL) and 122-125 (SKID). The segment at 122 to 125 (SKID) is G4. Residues 152 to 154 (LSA) form a G5 region. One can recognise a KH type-2 domain in the interval 204–280 (LSDEIPYESD…FLNLQVIAQK (77 aa)).

It belongs to the TRAFAC class TrmE-Era-EngA-EngB-Septin-like GTPase superfamily. Era GTPase family. In terms of assembly, monomer.

Its subcellular location is the cytoplasm. The protein localises to the cell inner membrane. Its function is as follows. An essential GTPase that binds both GDP and GTP, with rapid nucleotide exchange. Plays a role in 16S rRNA processing and 30S ribosomal subunit biogenesis and possibly also in cell cycle regulation and energy metabolism. This is GTPase Era from Helicobacter pylori (strain HPAG1).